A 192-amino-acid polypeptide reads, in one-letter code: Elongation factor P (192 aa).

The protein belongs to the elongation factor P family.

The protein localises to the cytoplasm. It functions in the pathway protein biosynthesis; polypeptide chain elongation. Its function is as follows. Involved in peptide bond synthesis. Stimulates efficient translation and peptide-bond synthesis on native or reconstituted 70S ribosomes in vitro. Probably functions indirectly by altering the affinity of the ribosome for aminoacyl-tRNA, thus increasing their reactivity as acceptors for peptidyl transferase. The polypeptide is Elongation factor P (Borrelia recurrentis (strain A1)).